The chain runs to 244 residues: NAD reductase coq12 (244 aa).

The segment at 131–158 is disordered; that stretch reads NPLMNSEKNSTSVEDLPGSNRTQQTSSH. Over residues 132-158 the composition is skewed to polar residues; it reads PLMNSEKNSTSVEDLPGSNRTQQTSSH.

It localises to the mitochondrion. The catalysed reaction is a reduced flavin + NAD(+) = an oxidized flavin + NADH + 2 H(+). In terms of biological role, NADH-dependent flavin reductase that acts in the coenzyme Q biosynthetic pathway. Required for synthesis of the p-hydroxybenzoic acid (PHB) precursor to form a quinone backbone. The chain is NAD reductase coq12 from Schizosaccharomyces pombe (strain 972 / ATCC 24843) (Fission yeast).